The chain runs to 1992 residues: Otoferlin (1992 aa).

3 consecutive C2 domains span residues 1 to 98 (MALV…EVSD), 241 to 362 (KRSK…HKWA), and 405 to 536 (IEGN…FLPT). Residues 1-1958 (MALVVHLKTV…IRYFIWHNYR (1958 aa)) are Cytoplasmic-facing. The interval 655–699 (PALAKKKKEGGGESEEEESELIHNSSEEEAEDDGDLTSVPSTPPM) is disordered. C2 domains are found at residues 952–1077 (IQAV…PPRF) and 1124–1250 (RGPI…NNWA). Asp984, Asp990, Asp1046, and Asp1048 together coordinate Ca(2+). Positions 1282-1363 (VKVDLNEDEK…ESAEIKADDF (82 aa)) form a coiled coil. Disordered regions lie at residues 1288–1311 (EDEK…EEEP) and 1354–1399 (ESAE…KPKV). The segment covering 1356–1399 (AEIKADDFPMKGTKPKEKSKDKKSTKDKKKNNDGTEKRPPKPKV) has biased composition (basic and acidic residues). 2 consecutive C2 domains span residues 1470-1588 (DPNM…ATCG) and 1711-1860 (PAPG…KQCS). 8 residues coordinate Ca(2+): Asp1503, Asp1509, Asp1558, Asp1560, Asp1566, Asp1831, Ser1834, and Asp1837. The helical transmembrane segment at 1959-1979 (WLILKALALLLLLLLVGLFLY) threads the bilayer. Residues 1980 to 1992 (SIPGYLVKKLLGA) lie on the Extracellular side of the membrane.

The protein belongs to the ferlin family. Requires Ca(2+) as cofactor.

The protein localises to the cytoplasmic vesicle. The protein resides in the secretory vesicle. Its subcellular location is the synaptic vesicle membrane. It is found in the basolateral cell membrane. It localises to the endoplasmic reticulum membrane. The protein localises to the golgi apparatus membrane. The protein resides in the presynaptic cell membrane. Its subcellular location is the cell membrane. In terms of biological role, key calcium ion sensor involved in the Ca(2+)-triggered synaptic vesicle-plasma membrane fusion and in the control of neurotransmitter release at these output synapses. In Danio rerio (Zebrafish), this protein is Otoferlin (otof).